Here is a 192-residue protein sequence, read N- to C-terminus: Probable GTP-binding protein EngB (192 aa).

Residues 22 to 192 (NLPQIVIVGR…QVLSIFEKYA (171 aa)) form the EngB-type G domain. Residues 30-37 (GRSNVGKS), 57-61 (GKTRG), 75-78 (DLPG), 142-145 (TKAD), and 173-175 (FSA) each bind GTP. Residues Ser37 and Thr59 each coordinate Mg(2+).

This sequence belongs to the TRAFAC class TrmE-Era-EngA-EngB-Septin-like GTPase superfamily. EngB GTPase family. Requires Mg(2+) as cofactor.

Its function is as follows. Necessary for normal cell division and for the maintenance of normal septation. The polypeptide is Probable GTP-binding protein EngB (Thermoanaerobacter pseudethanolicus (strain ATCC 33223 / 39E) (Clostridium thermohydrosulfuricum)).